The primary structure comprises 743 residues: Myb-related protein B (743 aa).

Positions methionine 1–arginine 29 are disordered. Residues aspartate 9–valine 22 show a composition bias toward acidic residues. 3 HTH myb-type domains span residues lysine 26–leucine 77, histidine 78–valine 133, and lysine 134–valine 184. DNA-binding regions (H-T-H motif) lie at residues tryptophan 54–leucine 77, tryptophan 106–leucine 129, and tryptophan 157–isoleucine 180. 2 disordered regions span residues valine 221–alanine 262 and valine 381–lysine 406.

As to quaternary structure, component of the DREAM complex.

Its subcellular location is the nucleus. The protein is Myb-related protein B (mybl2) of Xenopus laevis (African clawed frog).